The chain runs to 938 residues: Protein translocase subunit SecA (938 aa).

ATP is bound by residues Q90, 108 to 112, and D504; that span reads GEGKT.

This sequence belongs to the SecA family. In terms of assembly, monomer and homodimer. Part of the essential Sec protein translocation apparatus which comprises SecA, SecYEG and auxiliary proteins SecDF. Other proteins may also be involved.

It is found in the cell inner membrane. Its subcellular location is the cellular thylakoid membrane. The protein localises to the cytoplasm. It catalyses the reaction ATP + H2O + cellular proteinSide 1 = ADP + phosphate + cellular proteinSide 2.. Its function is as follows. Part of the Sec protein translocase complex. Interacts with the SecYEG preprotein conducting channel. Has a central role in coupling the hydrolysis of ATP to the transfer of proteins into and across the cell membrane, serving as an ATP-driven molecular motor driving the stepwise translocation of polypeptide chains across the membrane. Functionally, probably participates in protein translocation into and across both the cytoplasmic and thylakoid membranes in cyanobacterial cells. This is Protein translocase subunit SecA from Picosynechococcus sp. (strain ATCC 27264 / PCC 7002 / PR-6) (Agmenellum quadruplicatum).